A 142-amino-acid polypeptide reads, in one-letter code: Protein OrfX1 (142 aa).

The protein belongs to the TULIP P47 family. In terms of assembly, orfX1 was not detected as part of a crude toxin extract that includes BoNTA2/NTNH, P47, OrfX2 and OrfX3.

In terms of biological role, part of a botulinum neurotoxin type A2 (BoNT) locus; may be part of a progenitor toxin complex required to protect BoNT during its passage through the host gastrointestinal tract. Binds phosphatidylinositol (3,4) bisphosphate, phosphatidylethanolamine and phosphatidylserine. The sequence is that of Protein OrfX1 (orfX1) from Clostridium botulinum (strain Kyoto / Type A2).